The following is a 731-amino-acid chain: Small conductance calcium-activated potassium channel protein 3 (731 aa).

Residues 1–11 (MDTSGHFHDSG) show a composition bias toward basic and acidic residues. Disordered regions lie at residues 1–170 (MDTS…SNPF) and 239–258 (ATHN…FPKA). A compositionally biased stretch (low complexity) spans 30-40 (QQQQQQQQQQQ). The segment covering 41 to 51 (QPPPPAPPAAP) has biased composition (pro residues). The segment covering 52–95 (QQPLGPSLQPQPPQLQQQQQQQQQQQQQQPPHPLSQLAQLQSQP) has biased composition (low complexity). Over residues 112-132 (PSSNSTAILHPSSRQGSQLNL) the composition is skewed to polar residues. Residues 138 to 147 (GHSPSSTATS) are compositionally biased toward low complexity. Phosphoserine is present on S167. Residues 239-256 (ATHNHQHAGTTASSTTFP) show a composition bias toward polar residues. The helical transmembrane segment at 288–308 (LIFGMFGIVVMVIETELSWGL) threads the bilayer. A helical membrane pass occupies residues 315–335 (FSLALKCLISLSTIILLGLII). Residues 366 to 386 (ISLEMLVCAIHPIPGEYKFFW) form a helical membrane-spanning segment. A helical transmembrane segment spans residues 405–425 (IILSIPMFLRLYLIARVMLLH). Residues 454–474 (LMTICPGTVLLVFSISLWIIA) traverse the membrane as a helical segment. The pore-forming intramembrane region spans 494-514 (FLGAMWLISITFLSIGYGDMV). Residues 523-543 (VCLLTGIMGAGCTALVVAVVA) form a helical membrane-spanning segment. Residues 561-637 (DTQLTKRIKN…LVDLSKMQNV (77 aa)) are calmodulin-binding. Positions 642–669 (ITELNDRSEDLEKQIGSLESKLEHLTAS) form a coiled coil. The interval 709–731 (ISDSPIGVSSTSFPTPYTSSSSC) is disordered. The segment covering 717-731 (SSTSFPTPYTSSSSC) has biased composition (low complexity).

It belongs to the potassium channel KCNN family. KCa2.3/KCNN3 subfamily. As to quaternary structure, homodimer. Heteromultimer with KCNN2 or KCNN1; this modulates plasma membrane expression and consequently the small conductance calcium-activated potassium channel activity. The complex is composed of 4 channel subunits each of which binds to a calmodulin subunit which regulates the channel activity through calcium-binding. Interacts with CALM1. As to expression, widely distributed in human tissues and is present at 20-60% of KCNN3 in the brain.

The protein localises to the cell membrane. It localises to the cytoplasm. It is found in the myofibril. Its subcellular location is the sarcomere. The protein resides in the z line. The enzyme catalyses K(+)(in) = K(+)(out). Inhibited by bee venom neurotoxin apamin. In terms of biological role, small conductance calcium-activated potassium channel that mediates the voltage-independent transmembrane transfer of potassium across the cell membrane through a constitutive interaction with calmodulin which binds the intracellular calcium allowing its opening. The current is characterized by a voltage-independent activation, an intracellular calcium concentration increase-dependent activation and a single-channel conductance of 10 picosiemens. Also presents an inwardly rectifying current, thus reducing its already small outward conductance of potassium ions, which is particularly the case when the membrane potential displays positive values, above + 20 mV. Activation is followed by membrane hyperpolarization. Thought to regulate neuronal excitability by contributing to the slow component of synaptic afterhyperpolarization. Does not function as a small conductance calcium-activated potassium channel. Selectively suppresses endogenous KCNN3 currents, in a dominant-negative fashion by decreasing the abundance of functional channels in the plasma membrane, possibly by selectively coassembling with and sequestering native KCNN3 protein in intracellular compartments. This dominant inhibitory effect extends to other members of the SK subfamily. This chain is Small conductance calcium-activated potassium channel protein 3, found in Homo sapiens (Human).